Here is a 343-residue protein sequence, read N- to C-terminus: Globoside alpha-1,3-N-acetylgalactosaminyltransferase 1 (343 aa).

Topologically, residues 1–6 are cytoplasmic; it reads MISRKA. The helical; Signal-anchor for type II membrane protein transmembrane segment at 7 to 27 threads the bilayer; the sequence is LGSLVCLSAVATLIWIASGNW. The Lumenal portion of the chain corresponds to 28-343; the sequence is KVHYLPYYLP…VDKNYQEVRN (316 aa). N104 is a glycosylation site (N-linked (GlcNAc...) asparagine). Substrate-binding positions include 112 to 117, 202 to 204, and 224 to 227; these read FAVGKY, DID, and HPGY. Positions 202 and 204 each coordinate Mn(2+). Catalysis depends on E294, which acts as the Nucleophile.

The protein belongs to the glycosyltransferase 6 family. Mn(2+) is required as a cofactor.

It localises to the golgi apparatus membrane. Its pathway is protein modification; protein glycosylation. May catalyze the formation of some glycolipid via the addition of N-acetylgalactosamine (GalNAc) in alpha-1,3-linkage to some substrate. Glycolipids probably serve for adherence of some pathogens. The sequence is that of Globoside alpha-1,3-N-acetylgalactosaminyltransferase 1 from Gallus gallus (Chicken).